Reading from the N-terminus, the 376-residue chain is MQTFLVIIFMMVIGALIGGVTNVIAVKMLFHPFKTYYIFKKRVPFTPGLIPNRRKEIADKIGQVVEEHLLTEEVIQAKLNAPTSRDAIEEIIFKQIAKLKENHTTIQSLADIVDIDFSKTANQKLDELISDKMDNFYLDYQNTPIQQLIPNDIESSIDDKVALLPELLFDRARVYLKSEKGGADIASMLDTFFNEKGKIVGMLQMFMTKESIAERIQHELIRLTSHPKAKAIATQIIENEYATMKSKQLNELINETQYQAFKTSVTELALRYVDLEQTSHKPLHTIMPRFISFLETKVSKTLTDVIIDNASKHLSPIMKKINLRQMVEEQINTFDLAYIEKLIIDIANKELKLIMFLGFLLGGIIGLFQGVIAIFV.

Transmembrane regions (helical) follow at residues F4–I24 and F356–V376.

Belongs to the UPF0754 family.

The protein resides in the cell membrane. The sequence is that of UPF0754 membrane protein SSP0953 from Staphylococcus saprophyticus subsp. saprophyticus (strain ATCC 15305 / DSM 20229 / NCIMB 8711 / NCTC 7292 / S-41).